Consider the following 499-residue polypeptide: Glutamyl-tRNA(Gln) amidotransferase subunit B, chloroplastic/mitochondrial (499 aa).

It belongs to the GatB/GatE family. GatB subfamily. As to quaternary structure, subunit of the heterotrimeric GatCAB amidotransferase (AdT) complex, composed of A, B and C subunits.

The protein localises to the mitochondrion. The protein resides in the plastid. It is found in the chloroplast. The catalysed reaction is L-glutamyl-tRNA(Gln) + L-glutamine + ATP + H2O = L-glutaminyl-tRNA(Gln) + L-glutamate + ADP + phosphate + H(+). Its function is as follows. Allows the formation of correctly charged Gln-tRNA(Gln) through the transamidation of misacylated Glu-tRNA(Gln) in chloroplasts and mitochondria. The reaction takes place in the presence of glutamine and ATP through an activated gamma-phospho-Glu-tRNA(Gln). This Ostreococcus lucimarinus (strain CCE9901) protein is Glutamyl-tRNA(Gln) amidotransferase subunit B, chloroplastic/mitochondrial.